We begin with the raw amino-acid sequence, 276 residues long: Bifunctional protein FolD 1 (276 aa).

NADP(+)-binding positions include 161–163, S186, and T227; that span reads GRG.

Belongs to the tetrahydrofolate dehydrogenase/cyclohydrolase family. Homodimer.

The enzyme catalyses (6R)-5,10-methylene-5,6,7,8-tetrahydrofolate + NADP(+) = (6R)-5,10-methenyltetrahydrofolate + NADPH. It catalyses the reaction (6R)-5,10-methenyltetrahydrofolate + H2O = (6R)-10-formyltetrahydrofolate + H(+). The protein operates within one-carbon metabolism; tetrahydrofolate interconversion. In terms of biological role, catalyzes the oxidation of 5,10-methylenetetrahydrofolate to 5,10-methenyltetrahydrofolate and then the hydrolysis of 5,10-methenyltetrahydrofolate to 10-formyltetrahydrofolate. The protein is Bifunctional protein FolD 1 of Frankia casuarinae (strain DSM 45818 / CECT 9043 / HFP020203 / CcI3).